Reading from the N-terminus, the 216-residue chain is Ras-related protein RabN1 (216 aa).

Residue 15 to 22 coordinates GTP; it reads GDYNSGKT. The short motif at 37 to 44 is the Effector region element; it reads TCPSTFDL. GTP-binding positions include 62 to 66 and 128 to 131; these read DTAGQ and TKSD. C216 is lipidated: S-geranylgeranyl cysteine.

It belongs to the small GTPase superfamily. Rab family.

The protein resides in the cell membrane. This chain is Ras-related protein RabN1 (rabN1), found in Dictyostelium discoideum (Social amoeba).